The chain runs to 180 residues: Inosine/xanthosine triphosphatase (180 aa).

8 to 13 (TTNPAK) lines the substrate pocket. Positions 38 and 68 each coordinate Mg(2+). Substrate is bound at residue 68–69 (EA).

This sequence belongs to the YjjX NTPase family. In terms of assembly, homodimer. Requires Mg(2+) as cofactor. Mn(2+) is required as a cofactor.

It carries out the reaction XTP + H2O = XDP + phosphate + H(+). The enzyme catalyses ITP + H2O = IDP + phosphate + H(+). Functionally, phosphatase that hydrolyzes non-canonical purine nucleotides such as XTP and ITP to their respective diphosphate derivatives. Probably excludes non-canonical purines from DNA/RNA precursor pool, thus preventing their incorporation into DNA/RNA and avoiding chromosomal lesions. This chain is Inosine/xanthosine triphosphatase, found in Yersinia pseudotuberculosis serotype IB (strain PB1/+).